A 900-amino-acid chain; its full sequence is Phosphoenolpyruvate carboxylase (900 aa).

Residues H140 and K568 contribute to the active site.

This sequence belongs to the PEPCase type 1 family. Mg(2+) is required as a cofactor.

The catalysed reaction is oxaloacetate + phosphate = phosphoenolpyruvate + hydrogencarbonate. Functionally, forms oxaloacetate, a four-carbon dicarboxylic acid source for the tricarboxylic acid cycle. This Neisseria meningitidis serogroup A / serotype 4A (strain DSM 15465 / Z2491) protein is Phosphoenolpyruvate carboxylase.